Here is a 211-residue protein sequence, read N- to C-terminus: FMN-dependent NADH:quinone oxidoreductase (211 aa).

17–19 provides a ligand contact to FMN; sequence SYS.

This sequence belongs to the azoreductase type 1 family. In terms of assembly, homodimer. FMN is required as a cofactor.

The catalysed reaction is 2 a quinone + NADH + H(+) = 2 a 1,4-benzosemiquinone + NAD(+). The enzyme catalyses N,N-dimethyl-1,4-phenylenediamine + anthranilate + 2 NAD(+) = 2-(4-dimethylaminophenyl)diazenylbenzoate + 2 NADH + 2 H(+). In terms of biological role, quinone reductase that provides resistance to thiol-specific stress caused by electrophilic quinones. Its function is as follows. Also exhibits azoreductase activity. Catalyzes the reductive cleavage of the azo bond in aromatic azo compounds to the corresponding amines. This Bacillus velezensis (strain DSM 23117 / BGSC 10A6 / LMG 26770 / FZB42) (Bacillus amyloliquefaciens subsp. plantarum) protein is FMN-dependent NADH:quinone oxidoreductase.